A 151-amino-acid chain; its full sequence is Homeobox protein HD-1 (151 aa).

A DNA-binding region (homeobox) is located at residues 87 to 146 (ESIKSRRFPKFITEALERSFEIDQYPSEAEKARLAKICKLSTKQINNWFTNKRNRTKGHE).

The protein localises to the nucleus. The chain is Homeobox protein HD-1 (HD-1) from Encephalitozoon cuniculi (strain GB-M1) (Microsporidian parasite).